Reading from the N-terminus, the 173-residue chain is ATP synthase subunit delta (173 aa).

This sequence belongs to the ATPase delta chain family. In terms of assembly, F-type ATPases have 2 components, F(1) - the catalytic core - and F(0) - the membrane proton channel. F(1) has five subunits: alpha(3), beta(3), gamma(1), delta(1), epsilon(1). F(0) has three main subunits: a(1), b(2) and c(10-14). The alpha and beta chains form an alternating ring which encloses part of the gamma chain. F(1) is attached to F(0) by a central stalk formed by the gamma and epsilon chains, while a peripheral stalk is formed by the delta and b chains.

The protein resides in the cell inner membrane. F(1)F(0) ATP synthase produces ATP from ADP in the presence of a proton or sodium gradient. F-type ATPases consist of two structural domains, F(1) containing the extramembraneous catalytic core and F(0) containing the membrane proton channel, linked together by a central stalk and a peripheral stalk. During catalysis, ATP synthesis in the catalytic domain of F(1) is coupled via a rotary mechanism of the central stalk subunits to proton translocation. In terms of biological role, this protein is part of the stalk that links CF(0) to CF(1). It either transmits conformational changes from CF(0) to CF(1) or is implicated in proton conduction. This Campylobacter lari (strain RM2100 / D67 / ATCC BAA-1060) protein is ATP synthase subunit delta.